A 124-amino-acid polypeptide reads, in one-letter code: V-type proton ATPase subunit F 1 (124 aa).

It belongs to the V-ATPase F subunit family. In terms of assembly, V-ATPase is a heteromultimeric enzyme made up of two complexes: the ATP-hydrolytic V1 complex and the proton translocation V0 complex. The V1 complex consists of three catalytic AB heterodimers that form a heterohexamer, three peripheral stalks each consisting of EG heterodimers, one central rotor including subunits D and F, and the regulatory subunits C and H. The proton translocation complex V0 consists of the proton transport subunit a, a ring of proteolipid subunits c9c'', rotary subunit d, subunits e and f, and the accessory subunits VhaAC45 and ATP6AP2.

Its function is as follows. Subunit of the V1 complex of vacuolar(H+)-ATPase (V-ATPase), a multisubunit enzyme composed of a peripheral complex (V1) that hydrolyzes ATP and a membrane integral complex (V0) that translocates protons. V-ATPase is responsible for acidifying and maintaining the pH of intracellular compartments and in some cell types, is targeted to the plasma membrane, where it is responsible for acidifying the extracellular environment. The chain is V-type proton ATPase subunit F 1 (Vha14) from Drosophila pseudoobscura pseudoobscura (Fruit fly).